Consider the following 141-residue polypeptide: Mite group 2 allergen Tyr p 2 (141 aa).

The signal sequence occupies residues 1-15 (MKFLILFALVAVAAA). 3 cysteine pairs are disulfide-bonded: Cys-23-Cys-132, Cys-36-Cys-41, and Cys-87-Cys-92. N-linked (GlcNAc...) asparagine glycosylation occurs at Asn-103.

This sequence belongs to the NPC2 family.

The protein resides in the secreted. This is Mite group 2 allergen Tyr p 2 from Tyrophagus putrescentiae (Mold mite).